The sequence spans 283 residues: Protein FDD123 (283 aa).

Helical transmembrane passes span 24-44, 52-72, 97-117, 122-142, 148-168, 185-205, and 217-237; these read WLWA…AWTF, LFHQ…FSMA, YIQW…ATGL, IFTT…AALV, WGYY…LLWH, ILAA…WACA, and MIWY…FFLW.

Belongs to the archaeal/bacterial/fungal opsin family.

The protein localises to the membrane. This is Protein FDD123 (FDD123) from Trametes versicolor (White-rot fungus).